The chain runs to 66 residues: Putative membrane protein insertion efficiency factor (66 aa).

This sequence belongs to the UPF0161 family.

It localises to the cell inner membrane. In terms of biological role, could be involved in insertion of integral membrane proteins into the membrane. In Parasynechococcus marenigrum (strain WH8102), this protein is Putative membrane protein insertion efficiency factor.